We begin with the raw amino-acid sequence, 325 residues long: Phospholipid phosphatase-related protein type 1 (325 aa).

The N-linked (GlcNAc...) asparagine glycan is linked to N5. 3 consecutive transmembrane segments (helical) span residues 13–33, 67–87, and 127–147; these read IIPCFIFVELVIMAGTVLLAY, FITPLVLYCVLAATPTAIIFI, and FTGVFAFGLFATDIFVNAGQV. An N-linked (GlcNAc...) asparagine glycan is attached at N163. The next 3 helical transmembrane spans lie at 201-218, 230-247, and 257-277; these read AALSIYSALYATMYITST, VLCLGTLCTAFLTGLNRV, and VIAGFILGTAVALFLGMCVVH. S307 is modified (phosphoserine). N316 carries an N-linked (GlcNAc...) asparagine glycan.

The protein belongs to the PA-phosphatase related phosphoesterase family.

The protein resides in the cell membrane. Its subcellular location is the cell projection. It is found in the neuron projection. Its function is as follows. May play a role in neurite outgrowth and neurogenesis. The chain is Phospholipid phosphatase-related protein type 1 from Homo sapiens (Human).